Consider the following 444-residue polypeptide: Protein giant-lens (444 aa).

An N-terminal signal peptide occupies residues M1 to G24. Two-fingered domain 1 part repeat units lie at residues R123–P165 and C285–C307. Intrachain disulfides connect C141/C162, C147/C285, C164/C307, C316/C341, C343/C370, C378/C405, C384/C413, and C407/C440. Two-fingered domain repeat units follow at residues C316–C370 and C378–D444. N333 carries an N-linked (GlcNAc...) asparagine glycan.

In terms of assembly, interacts with spi. In terms of tissue distribution, during embryogenesis, expression is in a segmental pattern in the ectoderm and in the nervous system. In the eye imaginal disks, expression in photoreceptor cells begins a few rows posterior to the morphogenetic furrow. Also expressed in the wing disk. In the adult, expression is seen in the retina and lamina.

It is found in the secreted. In terms of biological role, regulates cell determination; development of ommatidia and optic lobe. Is a signaling molecule involved in the process of axon pathfinding in the eye. Part of the Ras pathway regulating programmed cell death in pupal eyes; activated by lozenge (lz). Antagonist for the Egfr receptor (gurken). Inhibits Egfr signaling without interacting directly with the receptor, but instead by sequestering the Egfr-activating ligand spitz (spi). This Drosophila melanogaster (Fruit fly) protein is Protein giant-lens (aos).